The following is a 346-amino-acid chain: Phosphate acyltransferase (346 aa).

It belongs to the PlsX family. In terms of assembly, homodimer. Probably interacts with PlsY.

Its subcellular location is the cytoplasm. It carries out the reaction a fatty acyl-[ACP] + phosphate = an acyl phosphate + holo-[ACP]. It participates in lipid metabolism; phospholipid metabolism. Its function is as follows. Catalyzes the reversible formation of acyl-phosphate (acyl-PO(4)) from acyl-[acyl-carrier-protein] (acyl-ACP). This enzyme utilizes acyl-ACP as fatty acyl donor, but not acyl-CoA. This chain is Phosphate acyltransferase, found in Delftia acidovorans (strain DSM 14801 / SPH-1).